The primary structure comprises 200 residues: Dephospho-CoA kinase (200 aa).

Residues 4-200 (VIGLTGGIAS…AILKKWNIID (197 aa)) form the DPCK domain. Residue 12–17 (ASGKST) coordinates ATP.

Belongs to the CoaE family.

It is found in the cytoplasm. The enzyme catalyses 3'-dephospho-CoA + ATP = ADP + CoA + H(+). It participates in cofactor biosynthesis; coenzyme A biosynthesis; CoA from (R)-pantothenate: step 5/5. Its function is as follows. Catalyzes the phosphorylation of the 3'-hydroxyl group of dephosphocoenzyme A to form coenzyme A. The protein is Dephospho-CoA kinase of Bacillus cereus (strain ZK / E33L).